A 359-amino-acid chain; its full sequence is Protein RecA (359 aa).

77–84 (GPESSGKT) is an ATP binding site.

It belongs to the RecA family.

It is found in the cytoplasm. Can catalyze the hydrolysis of ATP in the presence of single-stranded DNA, the ATP-dependent uptake of single-stranded DNA by duplex DNA, and the ATP-dependent hybridization of homologous single-stranded DNAs. It interacts with LexA causing its activation and leading to its autocatalytic cleavage. The sequence is that of Protein RecA from Paramagnetospirillum magneticum (strain ATCC 700264 / AMB-1) (Magnetospirillum magneticum).